The sequence spans 534 residues: Cytochrome c oxidase subunit 1 (534 aa).

A helical membrane pass occupies residues 16–36; that stretch reads VLYFMLAIFSGMAGTAMSLII. Ca(2+) is bound by residues Glu39, Ala42, and Gly44. 6 consecutive transmembrane segments (helical) span residues 57–77, 101–121, 147–167, 182–202, 235–255, and 267–287; these read VLVV…ALIG, IAFW…LVES, AIFA…NFIV, LPLF…SLPV, LFYF…FGII, and VFGE…GFLV. His62 serves as a coordination point for Fe(II)-heme a. Residue His241 participates in Cu cation binding. Residues 241 to 245 constitute a cross-link (1'-histidyl-3'-tyrosine (His-Tyr)); sequence HPEVY. Tyr245 provides a ligand contact to O2. Residues His290 and His291 each coordinate Cu cation. 2 helical membrane-spanning segments follow: residues 310–330 and 338–358; these read MIIA…IYGG and MLYA…GVAL. Residues His368 and Asp369 each contribute to the Mg(2+) site. 2 helical membrane-spanning segments follow: residues 372 to 392 and 414 to 434; these read YVVG…LFAG and FWLI…LGIN. His376 lines the heme a3 pocket. His378 serves as a coordination point for Fe(II)-heme a. Ca(2+) is bound at residue Pro441. The chain crosses the membrane as a helical span at residues 452 to 472; sequence YVASIGSFIATLSLFLFIYIL.

The protein belongs to the heme-copper respiratory oxidase family. As to quaternary structure, component of the cytochrome c oxidase (complex IV, CIV), a multisubunit enzyme composed of a catalytic core of 3 subunits and several supernumerary subunits. The complex exists as a monomer or a dimer and forms supercomplexes (SCs) in the inner mitochondrial membrane with ubiquinol-cytochrome c oxidoreductase (cytochrome b-c1 complex, complex III, CIII). The cofactor is heme. It depends on Cu cation as a cofactor.

It localises to the mitochondrion inner membrane. The enzyme catalyses 4 Fe(II)-[cytochrome c] + O2 + 8 H(+)(in) = 4 Fe(III)-[cytochrome c] + 2 H2O + 4 H(+)(out). Its pathway is energy metabolism; oxidative phosphorylation. Its function is as follows. Component of the cytochrome c oxidase, the last enzyme in the mitochondrial electron transport chain which drives oxidative phosphorylation. The respiratory chain contains 3 multisubunit complexes succinate dehydrogenase (complex II, CII), ubiquinol-cytochrome c oxidoreductase (cytochrome b-c1 complex, complex III, CIII) and cytochrome c oxidase (complex IV, CIV), that cooperate to transfer electrons derived from NADH and succinate to molecular oxygen, creating an electrochemical gradient over the inner membrane that drives transmembrane transport and the ATP synthase. Cytochrome c oxidase is the component of the respiratory chain that catalyzes the reduction of oxygen to water. Electrons originating from reduced cytochrome c in the intermembrane space (IMS) are transferred via the dinuclear copper A center (CU(A)) of subunit 2 and heme A of subunit 1 to the active site in subunit 1, a binuclear center (BNC) formed by heme A3 and copper B (CU(B)). The BNC reduces molecular oxygen to 2 water molecules using 4 electrons from cytochrome c in the IMS and 4 protons from the mitochondrial matrix. The polypeptide is Cytochrome c oxidase subunit 1 (COXI) (Saccharomyces paradoxus (Yeast)).